We begin with the raw amino-acid sequence, 118 residues long: Probable small nuclear ribonucleoprotein Sm D2 (118 aa).

Positions 29-115 (LSILTNSVKN…VILVVKNPLA (87 aa)) constitute a Sm domain.

Belongs to the snRNP core protein family.

It localises to the nucleus. It is found in the cytoplasm. The protein resides in the cytosol. Functionally, plays a role in pre-mRNA splicing as a core component of the spliceosomal U1, U2, U4 and U5 small nuclear ribonucleoproteins (snRNPs), the building blocks of the spliceosome. The chain is Probable small nuclear ribonucleoprotein Sm D2 (snr-4) from Caenorhabditis elegans.